The primary structure comprises 961 residues: Integrator complex subunit 7 (961 aa).

The span at 937–955 shows a compositional bias: low complexity; the sequence is QVRLQQQQGQPPSQQQQQR. The disordered stretch occupies residues 937 to 961; that stretch reads QVRLQQQQGQPPSQQQQQRTAYSRF.

Belongs to the Integrator subunit 7 family. As to quaternary structure, component of the Integrator complex, composed of core subunits INTS1, INTS2, INTS3, INTS4, INTS5, INTS6, INTS7, INTS8, INTS9/RC74, INTS10, INTS11/CPSF3L, INTS12, INTS13, INTS14 and INTS15. The core complex associates with protein phosphatase 2A subunits PPP2CA and PPP2R1A, to form the Integrator-PP2A (INTAC) complex.

The protein localises to the nucleus. The protein resides in the chromosome. It localises to the cytoplasm. In terms of biological role, component of the integrator complex, a multiprotein complex that terminates RNA polymerase II (Pol II) transcription in the promoter-proximal region of genes. The integrator complex provides a quality checkpoint during transcription elongation by driving premature transcription termination of transcripts that are unfavorably configured for transcriptional elongation: the complex terminates transcription by (1) catalyzing dephosphorylation of the C-terminal domain (CTD) of Pol II subunit POLR2A/RPB1 and SUPT5H/SPT5, (2) degrading the exiting nascent RNA transcript via endonuclease activity and (3) promoting the release of Pol II from bound DNA. The integrator complex is also involved in terminating the synthesis of non-coding Pol II transcripts, such as enhancer RNAs (eRNAs), small nuclear RNAs (snRNAs), telomerase RNAs and long non-coding RNAs (lncRNAs). The protein is Integrator complex subunit 7 (INTS7) of Gallus gallus (Chicken).